The sequence spans 613 residues: DNA mismatch repair protein MutL (613 aa).

This sequence belongs to the DNA mismatch repair MutL/HexB family.

This protein is involved in the repair of mismatches in DNA. It is required for dam-dependent methyl-directed DNA mismatch repair. May act as a 'molecular matchmaker', a protein that promotes the formation of a stable complex between two or more DNA-binding proteins in an ATP-dependent manner without itself being part of a final effector complex. This chain is DNA mismatch repair protein MutL, found in Flavobacterium psychrophilum (strain ATCC 49511 / DSM 21280 / CIP 103535 / JIP02/86).